Consider the following 342-residue polypeptide: tRNA N6-adenosine threonylcarbamoyltransferase (342 aa).

Positions 115 and 119 each coordinate Fe cation. Substrate-binding positions include 137-141 (IVSGG), Asp-170, Gly-183, Asp-187, and Asn-276. Asp-304 is a Fe cation binding site.

Belongs to the KAE1 / TsaD family. Fe(2+) serves as cofactor.

It localises to the cytoplasm. The catalysed reaction is L-threonylcarbamoyladenylate + adenosine(37) in tRNA = N(6)-L-threonylcarbamoyladenosine(37) in tRNA + AMP + H(+). In terms of biological role, required for the formation of a threonylcarbamoyl group on adenosine at position 37 (t(6)A37) in tRNAs that read codons beginning with adenine. Is involved in the transfer of the threonylcarbamoyl moiety of threonylcarbamoyl-AMP (TC-AMP) to the N6 group of A37, together with TsaE and TsaB. TsaD likely plays a direct catalytic role in this reaction. This chain is tRNA N6-adenosine threonylcarbamoyltransferase, found in Staphylococcus saprophyticus subsp. saprophyticus (strain ATCC 15305 / DSM 20229 / NCIMB 8711 / NCTC 7292 / S-41).